Here is a 391-residue protein sequence, read N- to C-terminus: Isocitrate dehydrogenase [NADP] (391 aa).

D-threo-isocitrate contacts are provided by S102, N104, R108, R118, and R142. Position 283 (D283) interacts with Mg(2+).

The protein belongs to the isocitrate and isopropylmalate dehydrogenases family. In terms of assembly, homodimer. It depends on Mg(2+) as a cofactor. The cofactor is Mn(2+).

It carries out the reaction D-threo-isocitrate + NADP(+) = 2-oxoglutarate + CO2 + NADPH. Functionally, catalyzes the oxidative decarboxylation of isocitrate to 2-oxoglutarate and carbon dioxide with the concomitant reduction of NADP(+). This chain is Isocitrate dehydrogenase [NADP] (icd), found in Streptococcus salivarius.